The following is a 248-amino-acid chain: DNA repair protein RecO (248 aa).

The protein belongs to the RecO family.

Functionally, involved in DNA repair and RecF pathway recombination. The sequence is that of DNA repair protein RecO from Bacillus cytotoxicus (strain DSM 22905 / CIP 110041 / 391-98 / NVH 391-98).